The sequence spans 271 residues: Shikimate kinase (271 aa).

83-93 (PIAMGLKSSSA) contacts ATP.

The protein belongs to the GHMP kinase family. Archaeal shikimate kinase subfamily.

The protein resides in the cytoplasm. It carries out the reaction shikimate + ATP = 3-phosphoshikimate + ADP + H(+). Its pathway is metabolic intermediate biosynthesis; chorismate biosynthesis; chorismate from D-erythrose 4-phosphate and phosphoenolpyruvate: step 5/7. The protein is Shikimate kinase of Thermococcus kodakarensis (strain ATCC BAA-918 / JCM 12380 / KOD1) (Pyrococcus kodakaraensis (strain KOD1)).